A 350-amino-acid polypeptide reads, in one-letter code: Ion-translocating oxidoreductase complex subunit D (350 aa).

A run of 5 helical transmembrane segments spans residues 15 to 35 (QTQT…LAQT), 36 to 56 (WFFG…ALGA), 67 to 87 (PIKP…IGLS), 88 to 108 (LPPL…IIIA), and 122 to 142 (PAMV…TSWL). FMN phosphoryl threonine is present on Thr-186. 4 helical membrane passes run 213 to 233 (WGGI…LFLL), 242 to 262 (IPGA…LMTP), 264 to 284 (ATAT…AFFI), and 299 to 316 (LVYG…RRFG).

It belongs to the NqrB/RnfD family. As to quaternary structure, the complex is composed of six subunits: RnfA, RnfB, RnfC, RnfD, RnfE and RnfG. FMN serves as cofactor.

It is found in the cell inner membrane. Its function is as follows. Part of a membrane-bound complex that couples electron transfer with translocation of ions across the membrane. The chain is Ion-translocating oxidoreductase complex subunit D from Aeromonas salmonicida (strain A449).